The sequence spans 602 residues: Translation initiation factor IF-2 (602 aa).

The 170-residue stretch at 112-281 (KRAPIITIMG…LLLCEVLDLK (170 aa)) folds into the tr-type G domain. Residues 121–128 (GHVDHGKT) are G1. 121 to 128 (GHVDHGKT) provides a ligand contact to GTP. The tract at residues 146 to 150 (GITQH) is G2. The interval 167-170 (DTPG) is G3. GTP contacts are provided by residues 167–171 (DTPGH) and 221–224 (NKMD). Positions 221 to 224 (NKMD) are G4. The segment at 257 to 259 (SAL) is G5.

It belongs to the TRAFAC class translation factor GTPase superfamily. Classic translation factor GTPase family. IF-2 subfamily.

It is found in the cytoplasm. Its function is as follows. One of the essential components for the initiation of protein synthesis. Protects formylmethionyl-tRNA from spontaneous hydrolysis and promotes its binding to the 30S ribosomal subunits. Also involved in the hydrolysis of GTP during the formation of the 70S ribosomal complex. This chain is Translation initiation factor IF-2, found in Mycoplasmopsis synoviae (strain 53) (Mycoplasma synoviae).